The chain runs to 244 residues: Inactive chemokine-binding protein (244 aa).

A disordered region spans residues 1–79 (MHVPASLQQS…STSVEDVDPP (79 aa)). The segment covering 37-53 (QDQTPTNDKICQSVTEI) has biased composition (polar residues). Positions 54–77 (TESESDPDPEVESEDDSTSVEDVD) are enriched in acidic residues.

This sequence belongs to the orthopoxvirus OPG001 family.

Its subcellular location is the host cytoplasm. Functionally, the protein is truncated in this vaccinal strain and presumably inactive, because the lack of signal peptide prevents the protein of being secreted. In the other strains inhibits host immune defense by binding to host chemokines. Binds host CC chemokines (beta chemokines) such as RANTES with high affinity, but not CXC or C chemokines (alpha and gamma chemokines). The protein is Inactive chemokine-binding protein (OPG001) of Vaccinia virus (strain Copenhagen) (VACV).